Consider the following 400-residue polypeptide: MSSQAFPAEEDHHNEERQTKKKRKTKHRHKFSEELLQELKEIFGENGYPDFTTRKTLANKFDCPVNVINNWFQNNRARLPPEERQRIFLTWKKHDFPVQACPFLSLQETQAAASNYATEQSFSCAKRALMRRPGCSLLEKQRIACQQMGYNCFSLENQETPSQQVGSMCSSLEKQGIPSQQVGSQCSYLVAGTEKHPGYALEYGGDTGSEHSTAYRFLSYNSAECLHPPPSSVPYFHGERTETRESQHASPFLLDYAQGAYGVKKDHCLCSFCLSLLQEQQQNDWQYHPQQHQQPQNYSEGMMLQEQLPMDSGPWDLEKQWPSAQSQLQSQLPQNNGKPLCSQLQHVPPQIAANSPLLPLGQDMQVGASSNSGLKCSSFRLRGLHGPATGTQGCSFAKYC.

Residues 1–29 are disordered; sequence MSSQAFPAEEDHHNEERQTKKKRKTKHRH. The segment covering 9–18 has biased composition (basic and acidic residues); that stretch reads EEDHHNEERQ. Residues 19–29 show a composition bias toward basic residues; the sequence is TKKKRKTKHRH. The segment at residues 24–83 is a DNA-binding region (homeobox); that stretch reads KTKHRHKFSEELLQELKEIFGENGYPDFTTRKTLANKFDCPVNVINNWFQNNRARLPPEE.

It is found in the nucleus. In Homo sapiens (Human), this protein is Cytoplasmic polyadenylated homeobox-like protein 2.